The primary structure comprises 71 residues: Ubiquinol-cytochrome c reductase complex assembly factor 6 (71 aa).

At Met1–Ser8 the chain is on the mitochondrial matrix side. A helical; Signal-anchor for type II membrane protein transmembrane segment spans residues Thr9–Ala25. Over Glu26 to Lys71 the chain is Mitochondrial intermembrane.

It belongs to the UQCC6 family. In terms of assembly, interacts with UQCRC1. Interacts with UQCRQ. Interacts with UQCC5. Forms a complex, named COMB/coordinator of mitochondrial CYTB biogenesis, composed of UQCC1, UQCC2, UQCC4, UQCC5 and UQCC6; stabilizes nascent cytochrome b/MT-CYB and promotes its membrane insertion. Forms a complex, named COMA, composed of UQCC1, UQCC2 and UQCC4; activates MT-CYB translation. Forms a complex, named COMC, composed of UQCC1, UQCC2; UQCC3 and UQCC4; mediates MT-CYB hemylation and association with the first nuclear-encoded complex III subunit UQCRQ. Interacts with MT-CYB. Cardiac and skeletal muscle (at protein level).

It localises to the mitochondrion inner membrane. Its function is as follows. Required for the assembly and stability of the mitochondrial ubiquinol-cytochrome c reductase complex (complex III (CIII) or cytochrome b-c1 complex), a multisubunit transmembrane complex that is part of the mitochondrial electron transport chain (ETC) which drives oxidative phosphorylation. Mediates early complex III biogenesis. Participates in regulating the levels of electron transport chain proteins, and therefore energy supply, in response to changes in energy demand. Also required for cytochrome c oxidase complex (complex IV) assembly. The chain is Ubiquinol-cytochrome c reductase complex assembly factor 6 from Homo sapiens (Human).